A 465-amino-acid polypeptide reads, in one-letter code: 3-isopropylmalate dehydratase large subunit (465 aa).

Positions 347, 407, and 410 each coordinate [4Fe-4S] cluster.

It belongs to the aconitase/IPM isomerase family. LeuC type 1 subfamily. Heterodimer of LeuC and LeuD. [4Fe-4S] cluster serves as cofactor.

The catalysed reaction is (2R,3S)-3-isopropylmalate = (2S)-2-isopropylmalate. Its pathway is amino-acid biosynthesis; L-leucine biosynthesis; L-leucine from 3-methyl-2-oxobutanoate: step 2/4. Functionally, catalyzes the isomerization between 2-isopropylmalate and 3-isopropylmalate, via the formation of 2-isopropylmaleate. This Tolumonas auensis (strain DSM 9187 / NBRC 110442 / TA 4) protein is 3-isopropylmalate dehydratase large subunit.